Reading from the N-terminus, the 625-residue chain is Exonuclease mut-7 homolog (625 aa).

Ser-17 bears the Phosphoserine mark. Residues Leu-410–Ser-602 enclose the 3'-5' exonuclease domain.

It belongs to the mut-7 family. In terms of assembly, interacts with AGO1; the interaction is not RNA dependent. Mg(2+) serves as cofactor.

Functionally, possesses 3'-5' exoribonuclease activity. Required for 3'-end trimming of AGO1-bound miRNAs, in particular multiple-isoform miRNAs, which represents a critical step in miRNA maturation. The polypeptide is Exonuclease mut-7 homolog (Nbr) (Drosophila melanogaster (Fruit fly)).